The chain runs to 88 residues: Small ribosomal subunit protein uS15 (88 aa).

Belongs to the universal ribosomal protein uS15 family. In terms of assembly, part of the 30S ribosomal subunit. Forms a bridge to the 50S subunit in the 70S ribosome, contacting the 23S rRNA.

One of the primary rRNA binding proteins, it binds directly to 16S rRNA where it helps nucleate assembly of the platform of the 30S subunit by binding and bridging several RNA helices of the 16S rRNA. Functionally, forms an intersubunit bridge (bridge B4) with the 23S rRNA of the 50S subunit in the ribosome. This chain is Small ribosomal subunit protein uS15, found in Opitutus terrae (strain DSM 11246 / JCM 15787 / PB90-1).